We begin with the raw amino-acid sequence, 158 residues long: NAD(P)H-quinone oxidoreductase subunit J, chloroplastic (158 aa).

Belongs to the complex I 30 kDa subunit family. In terms of assembly, NDH is composed of at least 16 different subunits, 5 of which are encoded in the nucleus.

Its subcellular location is the plastid. It is found in the chloroplast thylakoid membrane. It catalyses the reaction a plastoquinone + NADH + (n+1) H(+)(in) = a plastoquinol + NAD(+) + n H(+)(out). The enzyme catalyses a plastoquinone + NADPH + (n+1) H(+)(in) = a plastoquinol + NADP(+) + n H(+)(out). Its function is as follows. NDH shuttles electrons from NAD(P)H:plastoquinone, via FMN and iron-sulfur (Fe-S) centers, to quinones in the photosynthetic chain and possibly in a chloroplast respiratory chain. The immediate electron acceptor for the enzyme in this species is believed to be plastoquinone. Couples the redox reaction to proton translocation, and thus conserves the redox energy in a proton gradient. This Nandina domestica (Heavenly bamboo) protein is NAD(P)H-quinone oxidoreductase subunit J, chloroplastic.